The primary structure comprises 557 residues: Dihydroxy-acid dehydratase (557 aa).

Asp-78 serves as a coordination point for Mg(2+). Cys-119 is a [2Fe-2S] cluster binding site. Positions 120 and 121 each coordinate Mg(2+). An N6-carboxylysine modification is found at Lys-121. Position 192 (Cys-192) interacts with [2Fe-2S] cluster. Glu-443 is a Mg(2+) binding site. Ser-469 functions as the Proton acceptor in the catalytic mechanism.

Belongs to the IlvD/Edd family. In terms of assembly, homodimer. [2Fe-2S] cluster is required as a cofactor. The cofactor is Mg(2+).

It carries out the reaction (2R)-2,3-dihydroxy-3-methylbutanoate = 3-methyl-2-oxobutanoate + H2O. The catalysed reaction is (2R,3R)-2,3-dihydroxy-3-methylpentanoate = (S)-3-methyl-2-oxopentanoate + H2O. The protein operates within amino-acid biosynthesis; L-isoleucine biosynthesis; L-isoleucine from 2-oxobutanoate: step 3/4. It functions in the pathway amino-acid biosynthesis; L-valine biosynthesis; L-valine from pyruvate: step 3/4. In terms of biological role, functions in the biosynthesis of branched-chain amino acids. Catalyzes the dehydration of (2R,3R)-2,3-dihydroxy-3-methylpentanoate (2,3-dihydroxy-3-methylvalerate) into 2-oxo-3-methylpentanoate (2-oxo-3-methylvalerate) and of (2R)-2,3-dihydroxy-3-methylbutanoate (2,3-dihydroxyisovalerate) into 2-oxo-3-methylbutanoate (2-oxoisovalerate), the penultimate precursor to L-isoleucine and L-valine, respectively. This chain is Dihydroxy-acid dehydratase, found in Sulfurihydrogenibium sp. (strain YO3AOP1).